Consider the following 314-residue polypeptide: Bifunctional pinoresinol-lariciresinol reductase (314 aa).

NADP(+)-binding positions include Gly10 to Gly16, Arg35, and Lys44. Catalysis depends on Lys138, which acts as the Proton acceptor. Arg142 contributes to the NADP(+) binding site. His270 is a binding site for substrate.

It belongs to the NmrA-type oxidoreductase family. Isoflavone reductase subfamily. As to quaternary structure, dimer.

It carries out the reaction (+)-lariciresinol + NADP(+) = (+)-pinoresinol + NADPH + H(+). The enzyme catalyses (+)-secoisolariciresinol + NADP(+) = (-)-lariciresinol + NADPH + H(+). In terms of biological role, reductase involved in the lignan justicidin B biosynthesis. Catalyzes the enantioselective conversion of (+)-pinoresinol into (+)-lariciresinol and of (-)-lariciresinol into (+)-secoisolariciresinol. Low activity with the other enantiomers. Abstracts the 4R-hydride from the NADPH cofactor during catalysis. The protein is Bifunctional pinoresinol-lariciresinol reductase (PLR_Lp1) of Linum perenne (Perennial flax).